A 457-amino-acid polypeptide reads, in one-letter code: Argininosuccinate lyase (457 aa).

The protein belongs to the lyase 1 family. Argininosuccinate lyase subfamily.

Its subcellular location is the cytoplasm. The catalysed reaction is 2-(N(omega)-L-arginino)succinate = fumarate + L-arginine. It participates in amino-acid biosynthesis; L-arginine biosynthesis; L-arginine from L-ornithine and carbamoyl phosphate: step 3/3. The protein is Argininosuccinate lyase of Escherichia coli O9:H4 (strain HS).